The following is a 198-amino-acid chain: Holliday junction resolvase RecU (198 aa).

The interval Met1–Gly29 is disordered. Polar residues predominate over residues Lys8–Gly29. Mg(2+) is bound by residues Thr83, Asp85, Glu98, and Gln117.

This sequence belongs to the RecU family. The cofactor is Mg(2+).

The protein resides in the cytoplasm. The catalysed reaction is Endonucleolytic cleavage at a junction such as a reciprocal single-stranded crossover between two homologous DNA duplexes (Holliday junction).. In terms of biological role, endonuclease that resolves Holliday junction intermediates in genetic recombination. Cleaves mobile four-strand junctions by introducing symmetrical nicks in paired strands. Promotes annealing of linear ssDNA with homologous dsDNA. Required for DNA repair, homologous recombination and chromosome segregation. The sequence is that of Holliday junction resolvase RecU from Bacillus licheniformis (strain ATCC 14580 / DSM 13 / JCM 2505 / CCUG 7422 / NBRC 12200 / NCIMB 9375 / NCTC 10341 / NRRL NRS-1264 / Gibson 46).